The primary structure comprises 573 residues: Protein phosphatase EYA3 (573 aa).

Met1 bears the N-acetylmethionine mark. Disordered stretches follow at residues 1–46 (MEEE…LASN) and 236–296 (TYQS…DATS). The span at 20 to 46 (SGEQTISQVSNPDVSDQKPETSSLASN) shows a compositional bias: polar residues. Positions 254–271 (LSSGDPSTSPSLSQTTPS) are enriched in low complexity. A phosphoserine mark is found at Ser262 and Ser266. The Nucleophile role is filled by Asp309. Residues Asp309 and Asp311 each coordinate Mg(2+). The active-site Proton donor is the Asp311. 2 positions are modified to phosphoserine: Ser438 and Ser472. Mg(2+) is bound at residue Asp537.

This sequence belongs to the HAD-like hydrolase superfamily. EYA family. Interacts with SIX1 and DACH1, and probably SIX2, SIX4, SIX5. The cofactor is Mg(2+). Post-translationally, ser-266 phosphorylation is required for localization at sites of DNA damage and directing interaction with H2AX.

The protein localises to the cytoplasm. Its subcellular location is the nucleus. The enzyme catalyses O-phospho-L-tyrosyl-[protein] + H2O = L-tyrosyl-[protein] + phosphate. In terms of biological role, tyrosine phosphatase that specifically dephosphorylates 'Tyr-142' of histone H2AX (H2AXY142ph). 'Tyr-142' phosphorylation of histone H2AX plays a central role in DNA repair and acts as a mark that distinguishes between apoptotic and repair responses to genotoxic stress. Promotes efficient DNA repair by dephosphorylating H2AX, promoting the recruitment of DNA repair complexes containing MDC1. Its function as histone phosphatase probably explains its role in transcription regulation during organogenesis. Coactivates SIX1, and seems to coactivate SIX2, SIX4 and SIX5. The repression of precursor cell proliferation in myoblasts by SIX1 is switched to activation through recruitment of EYA3 to the SIX1-DACH1 complex and seems to be dependent on EYA3 phosphatase activity. May be involved in development of the eye. This is Protein phosphatase EYA3 (EYA3) from Homo sapiens (Human).